The chain runs to 333 residues: MEHDGYHLPVMVSEVTDLLARRPGIYIDGTLGGGGHAFSVMSALRRSGFENDSLLIGIDQDSFALEEAAGRLRPFASRVRLERGNFSEMAAIIERIRLREGCRLPVMGILLDLGVSSFQIDTPDRGFSYLRQGPLDMRMDPDGGWSAADIVNTAEESELAGIIYRYGEEKKSRAIARAIKARVREKGDFRETAELAAVVRSVVAGHDRQIKSLSRVFQALRIAVNDELGVLESALEDGTACLAPSGRMGVMSYHSLEDRMVKRFFRDKSEDDWGPKGVGLREPLRSAGFKLVTRKSVVASDDEVRINPRARSARLRVIEKKELEGESHDRVYQ.

S-adenosyl-L-methionine contacts are provided by residues 34–36, Asp-59, Phe-86, Asp-112, and Gln-119; that span reads GGH.

Belongs to the methyltransferase superfamily. RsmH family.

The protein localises to the cytoplasm. The catalysed reaction is cytidine(1402) in 16S rRNA + S-adenosyl-L-methionine = N(4)-methylcytidine(1402) in 16S rRNA + S-adenosyl-L-homocysteine + H(+). In terms of biological role, specifically methylates the N4 position of cytidine in position 1402 (C1402) of 16S rRNA. The sequence is that of Ribosomal RNA small subunit methyltransferase H from Prosthecochloris aestuarii (strain DSM 271 / SK 413).